A 640-amino-acid polypeptide reads, in one-letter code: Paramyosin, short form (640 aa).

2 nonhelical region regions span residues 1-122 (MALA…PDTV) and 420-640 (KLEQ…TITE). The stretch at 123 to 619 (VERSRQRRRR…IIRAKHRTFV (497 aa)) forms a coiled coil.

Belongs to the paramyosin family. Post-translationally, phosphorylated. As to expression, found in all adult muscle tissues except in indirect flight muscles and a set of temporary abdominal muscles. Not detected in larval muscle.

It is found in the cytoplasm. The protein resides in the myofibril. Paramyosin is a major structural component of many thick filaments isolated from invertebrate muscles. This Drosophila melanogaster (Fruit fly) protein is Paramyosin, short form (Prm).